Here is a 181-residue protein sequence, read N- to C-terminus: MNNNILVFDQVSNLNEPPNILLLSEEDHRVAKNAEIFIDKMITNLKFLSNSNSCDSSKKRKMIEQKTKCSNPRKNCGAKKLKTSPLPQPMTNLSHNHMFSIDEKPKRGRPPKPKPLCCQICLTNNTPYWRWSVIENNKIRVCNRCGQKIFKLEKSINEQLLFRIEIINLLNKIDDEKPIEK.

A GATA-type zinc finger spans residues 118-145 (CQICLTNNTPYWRWSVIENNKIRVCNRC).

The polypeptide is GATA zinc finger domain-containing protein 22 (gtaV) (Dictyostelium discoideum (Social amoeba)).